We begin with the raw amino-acid sequence, 353 residues long: Photosystem II protein D1 (353 aa).

The residue at position 2 (Thr2) is an N-acetylthreonine. Thr2 bears the Phosphothreonine mark. A run of 3 helical transmembrane segments spans residues 29–46 (YIGW…TATA), 118–133 (HFLL…EWEL), and 142–156 (WIAV…AAAA). Chlorophyll a is bound at residue His118. Position 126 (Tyr126) interacts with pheophytin a. Asp170 and Glu189 together coordinate [CaMn4O5] cluster. Residues 197 to 218 (FHMLGVAGVFGGSLFSAMHGSL) form a helical membrane-spanning segment. His198 provides a ligand contact to chlorophyll a. A quinone-binding positions include His215 and 264–265 (SF). A Fe cation-binding site is contributed by His215. His272 is a Fe cation binding site. A helical membrane pass occupies residues 274–288 (FLAAWPVVGIWFTAL). [CaMn4O5] cluster contacts are provided by His332, Glu333, Asp342, and Ala344. A propeptide spanning residues 345-353 (SVEAPSVNG) is cleaved from the precursor.

Belongs to the reaction center PufL/M/PsbA/D family. PSII is composed of 1 copy each of membrane proteins PsbA, PsbB, PsbC, PsbD, PsbE, PsbF, PsbH, PsbI, PsbJ, PsbK, PsbL, PsbM, PsbT, PsbX, PsbY, PsbZ, Psb30/Ycf12, at least 3 peripheral proteins of the oxygen-evolving complex and a large number of cofactors. It forms dimeric complexes. The cofactor is The D1/D2 heterodimer binds P680, chlorophylls that are the primary electron donor of PSII, and subsequent electron acceptors. It shares a non-heme iron and each subunit binds pheophytin, quinone, additional chlorophylls, carotenoids and lipids. D1 provides most of the ligands for the Mn4-Ca-O5 cluster of the oxygen-evolving complex (OEC). There is also a Cl(-1) ion associated with D1 and D2, which is required for oxygen evolution. The PSII complex binds additional chlorophylls, carotenoids and specific lipids.. Tyr-161 forms a radical intermediate that is referred to as redox-active TyrZ, YZ or Y-Z. Post-translationally, C-terminally processed by CTPA; processing is essential to allow assembly of the oxygen-evolving complex and thus photosynthetic growth.

The protein resides in the plastid. The protein localises to the chloroplast thylakoid membrane. The catalysed reaction is 2 a plastoquinone + 4 hnu + 2 H2O = 2 a plastoquinol + O2. Its function is as follows. Photosystem II (PSII) is a light-driven water:plastoquinone oxidoreductase that uses light energy to abstract electrons from H(2)O, generating O(2) and a proton gradient subsequently used for ATP formation. It consists of a core antenna complex that captures photons, and an electron transfer chain that converts photonic excitation into a charge separation. The D1/D2 (PsbA/PsbD) reaction center heterodimer binds P680, the primary electron donor of PSII as well as several subsequent electron acceptors. The sequence is that of Photosystem II protein D1 from Huperzia lucidula (Shining clubmoss).